Reading from the N-terminus, the 901-residue chain is HTH-type transcriptional regulator MalT (901 aa).

39–46 (SPAGYGKT) contacts ATP. The HTH luxR-type domain occupies 829-894 (ELIRTSPLTQ…AAVQHAQKLL (66 aa)). The H-T-H motif DNA-binding region spans 853–872 (NEQIAGELEVAATTIKTHIR).

Belongs to the MalT family. Monomer in solution. Oligomerizes to an active state in the presence of the positive effectors ATP and maltotriose.

Activated by ATP and maltotriose, which are both required for DNA binding. In terms of biological role, positively regulates the transcription of the maltose regulon whose gene products are responsible for uptake and catabolism of malto-oligosaccharides. Specifically binds to the promoter region of its target genes, recognizing a short DNA motif called the MalT box. This is HTH-type transcriptional regulator MalT from Escherichia coli O45:K1 (strain S88 / ExPEC).